The chain runs to 450 residues: Adenosylhomocysteinase (450 aa).

The substrate site is built by Thr-59, Asp-135, and Glu-160. Position 161-163 (161-163 (TTT)) interacts with NAD(+). Substrate-binding residues include Lys-190 and Asp-194. Residues Asn-195, 224 to 229 (GFGDVG), Glu-247, 303 to 305 (IGH), and Asn-350 each bind NAD(+).

It belongs to the adenosylhomocysteinase family. Requires NAD(+) as cofactor.

It localises to the cytoplasm. It catalyses the reaction S-adenosyl-L-homocysteine + H2O = L-homocysteine + adenosine. It participates in amino-acid biosynthesis; L-homocysteine biosynthesis; L-homocysteine from S-adenosyl-L-homocysteine: step 1/1. Its function is as follows. Adenosylhomocysteine is a competitive inhibitor of S-adenosyl-L-methionine-dependent methyl transferase reactions; therefore adenosylhomocysteinase may play a key role in the control of methylations via regulation of the intracellular concentration of adenosylhomocysteine. This Candida albicans (strain SC5314 / ATCC MYA-2876) (Yeast) protein is Adenosylhomocysteinase (SAH1).